The following is a 62-amino-acid chain: RRCFNHPSSQPQTNKSCPPGENSCYNKQWRDHRGTIIERGCGCPTVKPGIKLRCCQSDDCNN.

Residues 1-16 show a composition bias toward polar residues; that stretch reads RRCFNHPSSQPQTNKS. Residues 1–21 are disordered; the sequence is RRCFNHPSSQPQTNKSCPPGE. Intrachain disulfides connect C3–C24, C17–C41, C43–C54, and C55–C60.

Belongs to the three-finger toxin family. Short-chain subfamily. Type I alpha-neurotoxin sub-subfamily. In terms of tissue distribution, expressed by the venom gland.

It is found in the secreted. In terms of biological role, binds to muscle nicotinic acetylcholine receptor (nAChR) and inhibit acetylcholine from binding to the receptor, thereby impairing neuromuscular transmission. This Laticauda crockeri (Crocker's sea snake) protein is Short neurotoxin A.